The following is a 158-amino-acid chain: Protein Smg homolog (158 aa).

This sequence belongs to the Smg family.

The chain is Protein Smg homolog from Herminiimonas arsenicoxydans.